Consider the following 370-residue polypeptide: NADH-quinone oxidoreductase subunit D 2 (370 aa).

The protein belongs to the complex I 49 kDa subunit family. NDH-1 is composed of 14 different subunits. Subunits NuoB, C, D, E, F, and G constitute the peripheral sector of the complex.

It is found in the cell inner membrane. It catalyses the reaction a quinone + NADH + 5 H(+)(in) = a quinol + NAD(+) + 4 H(+)(out). NDH-1 shuttles electrons from NADH, via FMN and iron-sulfur (Fe-S) centers, to quinones in the respiratory chain. The immediate electron acceptor for the enzyme in this species is believed to be ubiquinone. Couples the redox reaction to proton translocation (for every two electrons transferred, four hydrogen ions are translocated across the cytoplasmic membrane), and thus conserves the redox energy in a proton gradient. The chain is NADH-quinone oxidoreductase subunit D 2 from Solibacter usitatus (strain Ellin6076).